We begin with the raw amino-acid sequence, 259 residues long: Undecaprenyl-diphosphatase 4 (259 aa).

Transmembrane regions (helical) follow at residues 1-21 (MNWLEAFILGIIQGLTEFLPI), 39-59 (AGLFLDTMLHIGTLLAVFIYY), 71-91 (FSKLMLLLIVGTIPAVVIGLL), 99-119 (ISKTGITIGWEFLVTGFFLYV), 133-153 (ITYKDAFIIGSFQAAAIFPAI), 173-193 (AAYFSFLLSTPAIVGAIILQF), 208-228 (SLIVGTLSAAFFGYIAVSWMI), and 239-259 (FAYYVWGLGILILTLQFTDVF).

It belongs to the UppP family.

The protein localises to the cell membrane. It catalyses the reaction di-trans,octa-cis-undecaprenyl diphosphate + H2O = di-trans,octa-cis-undecaprenyl phosphate + phosphate + H(+). Catalyzes the dephosphorylation of undecaprenyl diphosphate (UPP). Confers resistance to bacitracin. The protein is Undecaprenyl-diphosphatase 4 of Bacillus thuringiensis subsp. konkukian (strain 97-27).